Here is a 783-residue protein sequence, read N- to C-terminus: Centrosomal protein of 89 kDa (783 aa).

Residues 28 to 49 (PKAAVPRTPPPRSPNPSPERPR) form a disordered region. Over residues 34–45 (RTPPPRSPNPSP) the composition is skewed to pro residues. Position 50 is a phosphoserine (S50). Disordered stretches follow at residues 63-157 (GRTV…DDLY) and 176-226 (DENI…DITG). A compositionally biased stretch (polar residues) spans 94-107 (ATTSQLRPRPNWQS). 2 stretches are compositionally biased toward basic and acidic residues: residues 139-155 (ELGDVSAREDRGGHSDD) and 196-214 (QQKDGKHPVLNLKDEKPPL). 2 coiled-coil regions span residues 234 to 333 (EITR…SRYQ) and 369 to 719 (LLLA…GELE).

Its subcellular location is the cytoplasm. It is found in the cytosol. It localises to the cytoskeleton. The protein localises to the microtubule organizing center. The protein resides in the centrosome. Its subcellular location is the spindle pole. It is found in the centriole. It localises to the mitochondrion intermembrane space. Functionally, required for ciliogenesis. Also plays a role in mitochondrial metabolism where it may modulate complex IV activity. The protein is Centrosomal protein of 89 kDa (CEP89) of Homo sapiens (Human).